The chain runs to 228 residues: Ribulose-phosphate 3-epimerase (228 aa).

Residue Ser9 participates in substrate binding. His34, Asp36, and His70 together coordinate a divalent metal cation. Catalysis depends on Asp36, which acts as the Proton acceptor. Residues His70, 146 to 149 (GKGG), 175 to 177 (DGG), and 197 to 198 (GT) contribute to the substrate site. Asp175 is an a divalent metal cation binding site. Asp175 (proton donor) is an active-site residue.

Belongs to the ribulose-phosphate 3-epimerase family. Co(2+) is required as a cofactor. The cofactor is Fe(2+). Mn(2+) serves as cofactor. Requires Zn(2+) as cofactor.

It carries out the reaction D-ribulose 5-phosphate = D-xylulose 5-phosphate. It functions in the pathway carbohydrate degradation; pentose phosphate pathway; D-xylulose 5-phosphate from D-ribulose 5-phosphate (non-oxidative stage): step 1/1. Its function is as follows. Catalyzes the reversible epimerization of D-ribulose 5-phosphate to D-xylulose 5-phosphate. The polypeptide is Ribulose-phosphate 3-epimerase (Schizosaccharomyces pombe (strain 972 / ATCC 24843) (Fission yeast)).